The chain runs to 270 residues: Tubulin-specific chaperone B (270 aa).

The region spanning 214–256 is the CAP-Gly domain; sequence GTVEFSSGVWIGVELDLPLGKNDGSVKGKQYFQCSPKYGCFAK.

It belongs to the TBCB family. In terms of assembly, supercomplex made of cofactors A to E. Cofactors A and D function by capturing and stabilizing tubulin in a quasi-native conformation. Cofactor E binds to the cofactor D-tubulin complex; interaction with cofactor C then causes the release of tubulin polypeptides that are committed to the native state.

Its subcellular location is the cytoplasm. It is found in the cytoskeleton. Functionally, binds to alpha-tubulin folding intermediates after their interaction with cytosolic chaperonin in the pathway leading from newly synthesized tubulin to properly folded heterodimer. This is Tubulin-specific chaperone B (tbcb) from Dictyostelium discoideum (Social amoeba).